We begin with the raw amino-acid sequence, 869 residues long: Serendipity locus protein H-1 (869 aa).

A compositionally biased stretch (basic and acidic residues) spans 1–17; the sequence is MEGGKGEGKRMKEEAPS. 2 disordered regions span residues 1 to 32 and 134 to 165; these read MEGGKGEGKRMKEEAPSKKLPPKIYGGDAGTP and FSVTFLRPEPPNAFTNSPFKKTSSSGTSTPVK. A compositionally biased stretch (polar residues) spans 146-164; that stretch reads AFTNSPFKKTSSSGTSTPV. 8 consecutive C2H2-type zinc fingers follow at residues 269-293, 299-321, 331-352, 358-380, 386-408, 414-436, 442-464, and 470-493; these read HKCLDCNGLLLETPDEVAKHEAAAH, YRCSECQREFELLAGLKKHLKTH, KKCPDCGKCLKLGSMWMHRKIH, YQCDICGQKFVQKINLTHHARIH, YECPECQKRFQERSHLQRHQKYH, YRCEKCGKMYKTERCLKVHNLVH, FACTVCDKSFISNSKLKQHSNIH, and FKCNYCPRDFTNFPNWLKHTRRRH. Disordered stretches follow at residues 554–573 and 617–652; these read TSTAAPAPAKQARKKKQPQQ and PKQTKAKRERKQLAPKQLQQKPQLLQQGQPQQSSLE. Residues 630-648 are compositionally biased toward low complexity; the sequence is APKQLQQKPQLLQQGQPQQ.

In terms of tissue distribution, distribution varies between nurse cells and the oocyte during oogenesis. Weakly expressed in follicle and border cells.

It is found in the nucleus. Functionally, may belong to a complex set of multifingered proteins which play an important role in gene activation or regulation at early embryonic stages through a maximal accumulation of their transcripts (or protein product) in the mature oocyte. The chain is Serendipity locus protein H-1 (wdn) from Drosophila melanogaster (Fruit fly).